The chain runs to 175 residues: Nudix hydrolase 25 (175 aa).

The region spanning 7 to 155 is the Nudix hydrolase domain; that stretch reads GYRPNVGVCL…KRPTYEEVIK (149 aa). 3 residues coordinate Mn(2+): Gly-40, Glu-55, and Glu-59. Positions 40–61 match the Nudix box motif; sequence GGIEDGEDPKSAAMRELQEETG.

This sequence belongs to the Nudix hydrolase family. The cofactor is Mn(2+).

It carries out the reaction P(1),P(4)-bis(5'-guanosyl) tetraphosphate + H2O = GMP + GTP + 2 H(+). Functionally, mediates the hydrolysis of diadenosine 5',5''-P(1)P(4) tetraphosphate (Ap(4)A), a signaling molecule involved in regulation of DNA replication and repair. The protein is Nudix hydrolase 25 of Arabidopsis thaliana (Mouse-ear cress).